We begin with the raw amino-acid sequence, 434 residues long: Trigger factor (434 aa).

The PPIase FKBP-type domain maps to 160 to 245 (GDKVKMNFVG…LTEVQAANLP (86 aa)).

Belongs to the FKBP-type PPIase family. Tig subfamily.

The protein resides in the cytoplasm. It catalyses the reaction [protein]-peptidylproline (omega=180) = [protein]-peptidylproline (omega=0). Its function is as follows. Involved in protein export. Acts as a chaperone by maintaining the newly synthesized protein in an open conformation. Functions as a peptidyl-prolyl cis-trans isomerase. The polypeptide is Trigger factor (Shewanella baltica (strain OS223)).